The following is a 250-amino-acid chain: Complement factor B-like protease (250 aa).

3 consecutive Sushi domains span residues 3–73 (TRCD…KCRA), 74–133 (VWCP…VCDD), and 136–193 (GDCP…QCRA). 6 disulfides stabilise this stretch: Cys5–Cys44, Cys30–Cys71, Cys76–Cys118, Cys104–Cys131, Cys138–Cys178, and Cys164–Cys191. Residue Asn115 is glycosylated (N-linked (GlcNAc...) asparagine). Residue Asn221 is glycosylated (N-linked (GlcNAc...) asparagine).

It belongs to the peptidase S1 family. Plasma.

It localises to the secreted. Required in both the classical and alternate pathways of the complement system. This chain is Complement factor B-like protease, found in Gallus gallus (Chicken).